Consider the following 929-residue polypeptide: Protein translocase subunit SecA (929 aa).

ATP contacts are provided by residues Q83, 101 to 105, and D491; that span reads GEGKT.

Belongs to the SecA family. As to quaternary structure, monomer and homodimer. Part of the essential Sec protein translocation apparatus which comprises SecA, SecYEG and auxiliary proteins SecDF. Other proteins may also be involved.

Its subcellular location is the cell inner membrane. The protein resides in the cellular thylakoid membrane. It localises to the cytoplasm. The catalysed reaction is ATP + H2O + cellular proteinSide 1 = ADP + phosphate + cellular proteinSide 2.. In terms of biological role, part of the Sec protein translocase complex. Interacts with the SecYEG preprotein conducting channel. Has a central role in coupling the hydrolysis of ATP to the transfer of proteins into and across the cell membrane, serving as an ATP-driven molecular motor driving the stepwise translocation of polypeptide chains across the membrane. Functionally, probably participates in protein translocation into and across both the cytoplasmic and thylakoid membranes in cyanobacterial cells. The sequence is that of Protein translocase subunit SecA from Thermosynechococcus vestitus (strain NIES-2133 / IAM M-273 / BP-1).